The following is a 270-amino-acid chain: Undecaprenyl-diphosphatase (270 aa).

Helical transmembrane passes span 1 to 21 (MDLF…FLPI), 39 to 59 (QGLV…MLYF), 87 to 107 (SHLV…GLAC), 114 to 134 (VARD…LLWW), 147 to 167 (ALSW…LIPG), 193 to 213 (FLMA…DLFA), 223 to 243 (FLGV…HGLL), and 250 to 270 (TMTP…ATLG).

This sequence belongs to the UppP family.

It is found in the cell inner membrane. It carries out the reaction di-trans,octa-cis-undecaprenyl diphosphate + H2O = di-trans,octa-cis-undecaprenyl phosphate + phosphate + H(+). Its function is as follows. Catalyzes the dephosphorylation of undecaprenyl diphosphate (UPP). Confers resistance to bacitracin. The sequence is that of Undecaprenyl-diphosphatase from Magnetococcus marinus (strain ATCC BAA-1437 / JCM 17883 / MC-1).